The primary structure comprises 299 residues: Tyrosine recombinase XerD (299 aa).

The 88-residue stretch at 2 to 89 (ETVNNNLQQF…AIRSFHQFLL (88 aa)) folds into the Core-binding (CB) domain. A Tyr recombinase domain is found at 110 to 293 (RLPKALTIEE…TKTRMRDVYA (184 aa)). Catalysis depends on residues R150, K174, H245, R248, and H271. The O-(3'-phospho-DNA)-tyrosine intermediate role is filled by Y280.

Belongs to the 'phage' integrase family. XerD subfamily. Forms a cyclic heterotetrameric complex composed of two molecules of XerC and two molecules of XerD.

The protein localises to the cytoplasm. Its function is as follows. Site-specific tyrosine recombinase, which acts by catalyzing the cutting and rejoining of the recombining DNA molecules. The XerC-XerD complex is essential to convert dimers of the bacterial chromosome into monomers to permit their segregation at cell division. It also contributes to the segregational stability of plasmids. The chain is Tyrosine recombinase XerD from Halalkalibacterium halodurans (strain ATCC BAA-125 / DSM 18197 / FERM 7344 / JCM 9153 / C-125) (Bacillus halodurans).